A 957-amino-acid polypeptide reads, in one-letter code: Calsyntenin-3 (957 aa).

An N-terminal signal peptide occupies residues 1–19 (MTLLLVSLLLASLLQISSG). Over 1 to 21 (MTLLLVSLLLASLLQISSGNK) the chain is Cytoplasmic. Residues 20–848 (NKANKHKPWI…SHRNSMVPSA (829 aa)) are Extracellular-facing. Positions 22–42 (ANKHKPWIEAEYQGIVMENDN) form an intramembrane region, helical. Cadherin domains lie at 29–145 (IEAE…APVF) and 146–246 (VERL…KPSW). Over 43–73 (TVLLNPPLFALDKDAPLRYAGEICGFRLHGS) the chain is Cytoplasmic. Positions 74 to 94 (GVPFKAVILDKATGEGLIRAK) form an intramembrane region, helical. Over 95–139 (EPVDCEAQKEHTFTTQAYDCVDGPDGANTKKSHKATVHVRVNDVN) the chain is Cytoplasmic. An intramembrane region (helical) is located at residues 140-160 (EFAPVFVERLYRAAVTEGKLY). Residues 161–248 (DRILRVEAID…KPTCKPSWQG (88 aa)) are Cytoplasmic-facing. The chain crosses the membrane as a helical span at residues 249-269 (WNKRIEYAPGAGSLALFPGIR). Residues 270–357 (LETCDEPLWN…GTQAVQVPLG (88 aa)) are Lumenal-facing. N-linked (GlcNAc...) asparagine glycans are attached at residues Asn-299, Asn-327, Asn-347, Asn-508, and Asn-741. The helical transmembrane segment at 849 to 869 (ATLIIVVCVGFLVLMVILGLV) threads the bilayer. Topologically, residues 870 to 957 (RIHSLHRRVS…RIIESPPHRY (88 aa)) are cytoplasmic. Positions 916–957 (QQTGVAGVAGGQQEEEDSSDSEAADSPSSDERRIIESPPHRY) are disordered. A compositionally biased stretch (acidic residues) spans 928-938 (QEEEDSSDSEA). Basic and acidic residues predominate over residues 944-957 (SDERRIIESPPHRY).

This sequence belongs to the calsyntenin family. Interacts (via cadherin domains) with both alpha and beta isoforms of neurexins (NRXN1, NRXN2 and NRXN3). Directly interacts with APBA2. Forms a tripartite complex with APBA2 and APP. Interacts with low affinity with KLC1. Interacts with SLC23A2/SVCT2. In terms of assembly, interacts with CIDEA; inhibiting the lipid transferase activity of CIDEA. Interacts with CIDEC; inhibiting the lipid transferase activity of CIDEC. In terms of processing, proteolytically processed under normal cellular conditions. A primary zeta-cleavage generates a large extracellular (soluble) N-terminal domain (sAlc) and a short C-terminal transmembrane fragment (CTF1). A secondary cleavage catalyzed by gamma-secretase within the transmembrane domain releases the beta-Alc-beta chain in the extracellular milieu and produces an intracellular fragment (AlcICD). This processing is strongly suppressed in the tripartite complex formed with APBA2 and APP, which seems to prevent the association with gamma-secretase. Ubiquitinated: endoplasmic reticulum-localized protein is ubiquitinated and degraded by the endoplasmic reticulum-associated degradation (ERAD) pathway.

It is found in the postsynaptic cell membrane. Its subcellular location is the endoplasmic reticulum membrane. The protein localises to the golgi apparatus membrane. The protein resides in the cell projection. It localises to the dendrite. It is found in the lipid droplet. Functionally, postsynaptic adhesion molecule that binds to presynaptic neurexins to mediate both excitatory and inhibitory synapse formation. Promotes synapse development by acting as a cell adhesion molecule at the postsynaptic membrane, which associates with both neurexin-alpha and neurexin-beta proteins at the presynaptic membrane. Regulates the balance between excitatory and inhibitory synapses by inhibiting formation of excitatory parallel-fiber synapses and promoting formation of inhibitory synapses in the same neuron. May also be involved in ascorbate (vitamin C) uptake via its interaction with SLC23A2/SVCT2. Complex formation with APBA2 and APP, stabilizes APP metabolism and enhances APBA2-mediated suppression of beta-APP40 secretion, due to the retardation of intracellular APP maturation. In terms of biological role, adipose-specific isoform that plays a key role in adaptive thermogenesis. Facilitates the efficient use of stored triglyceride by promoting multilocular morphology of thermogenic adipocytes: acts by inhibiting the activity of CIDEA and CIDEC on lipid droplets, thereby preventing lipid droplet fusion and facilitating lipid utilization. May also participate in adaptive thermogenesis by promoting sympathetic innervation of thermogenic adipose tissue: acts by driving secretion of neurotrophic factor S100B from brown adipocytes, stimulating neurite outgrowth from sympathetic neurons. The chain is Calsyntenin-3 from Rattus norvegicus (Rat).